Consider the following 383-residue polypeptide: tRNA-specific 2-thiouridylase MnmA (383 aa).

ATP is bound by residues 9-16 (GMSGGVDS) and methionine 35. Residues 95-97 (NPD) form an interaction with target base in tRNA region. Cysteine 100 functions as the Nucleophile in the catalytic mechanism. A disulfide bridge links cysteine 100 with cysteine 196. An ATP-binding site is contributed by glycine 124. The interaction with tRNA stretch occupies residues 146 to 148 (KDQ). The Cysteine persulfide intermediate role is filled by cysteine 196. The interval 308 to 309 (RY) is interaction with tRNA.

Belongs to the MnmA/TRMU family.

The protein localises to the cytoplasm. It catalyses the reaction S-sulfanyl-L-cysteinyl-[protein] + uridine(34) in tRNA + AH2 + ATP = 2-thiouridine(34) in tRNA + L-cysteinyl-[protein] + A + AMP + diphosphate + H(+). In terms of biological role, catalyzes the 2-thiolation of uridine at the wobble position (U34) of tRNA, leading to the formation of s(2)U34. The protein is tRNA-specific 2-thiouridylase MnmA of Burkholderia lata (strain ATCC 17760 / DSM 23089 / LMG 22485 / NCIMB 9086 / R18194 / 383).